The following is a 496-amino-acid chain: Cobyric acid synthase (496 aa).

The GATase cobBQ-type domain occupies 264–458 (HTRIAVVAYP…LHGLFEDAAV (195 aa)). The Nucleophile role is filled by Cys-345. Residue His-450 is part of the active site.

Belongs to the CobB/CobQ family. CobQ subfamily.

It functions in the pathway cofactor biosynthesis; adenosylcobalamin biosynthesis. Functionally, catalyzes amidations at positions B, D, E, and G on adenosylcobyrinic A,C-diamide. NH(2) groups are provided by glutamine, and one molecule of ATP is hydrogenolyzed for each amidation. This chain is Cobyric acid synthase, found in Acidovorax ebreus (strain TPSY) (Diaphorobacter sp. (strain TPSY)).